The following is a 126-amino-acid chain: Adenosine 5'-monophosphoramidase HINT1 (126 aa).

Ala-2 bears the N-acetylalanine mark. Residues 18–126 (IFGKIIRKEI…GGRQMHWPPG (109 aa)) enclose the HIT domain. Lys-21 and Lys-30 each carry N6-acetyllysine. 43–44 (DI) contacts AMP. Phosphoserine occurs at positions 45 and 72. AMP contacts are provided by residues Asn-99, 105–107 (GQS), and 112–114 (HLH). Residues 110–114 (HVHLH) carry the Histidine triad motif motif. The active-site Tele-AMP-histidine intermediate is His-112.

It belongs to the HINT family. Homodimer. Interacts with CDK7. Interacts with RUVBL1 and RUVBL2 and is associated with the LEF1/TCF1-CTNNB1 complex and with a KAT5 histone acetyltransferase complex. Identified in a complex with MITF and CTNNB1. Interacts with CDC34 and RBX1, and is part of a SCF (SKP2-CUL1-F-box protein) E3 ubiquitin-protein ligase complex. Interacts with SUMO1, SUMO2 and RGS17. Interacts with the Ten-1 ICD form of TENM1. Interacts with CALM1; interaction increases in the presence of calcium ions.

It is found in the cytoplasm. The protein localises to the nucleus. The enzyme catalyses adenosine 5'-phosphoramidate + H2O = AMP + NH4(+). Functionally, exhibits adenosine 5'-monophosphoramidase activity, hydrolyzing purine nucleotide phosphoramidates with a single phosphate group such as adenosine 5'monophosphoramidate (AMP-NH2) to yield AMP and NH2. Hydrolyzes adenosine 5'monophosphomorpholidate (AMP-morpholidate) and guanosine 5'monophosphomorpholidate (GMP-morpholidate). Hydrolyzes lysyl-AMP (AMP-N-epsilon-(N-alpha-acetyl lysine methyl ester)) generated by lysine tRNA ligase, as well as Met-AMP, His-AMP and Asp-AMP, lysyl-GMP (GMP-N-epsilon-(N-alpha-acetyl lysine methyl ester)) and AMP-N-alanine methyl ester. Can also convert adenosine 5'-O-phosphorothioate and guanosine 5'-O-phosphorothioate to the corresponding nucleoside 5'-O-phosphates with concomitant release of hydrogen sulfide. In addition, functions as a scaffolding protein that modulates transcriptional activation by the LEF1/TCF1-CTNNB1 complex and by the complex formed with MITF and CTNNB1. Modulates p53/TP53 levels and p53/TP53-mediated apoptosis. Modulates proteasomal degradation of target proteins by the SCF (SKP2-CUL1-F-box protein) E3 ubiquitin-protein ligase complex. Also exhibits SUMO-specific isopeptidase activity, deconjugating SUMO1 from RANGAP1 and RGS17. In Pongo abelii (Sumatran orangutan), this protein is Adenosine 5'-monophosphoramidase HINT1 (HINT1).